A 327-amino-acid chain; its full sequence is GMP reductase (327 aa).

Residue C175 is the Thioimidate intermediate of the active site. Residue 204-227 coordinates NADP(+); the sequence is IIADGGIRTHGDIAKSVRFGASMV.

It belongs to the IMPDH/GMPR family. GuaC type 2 subfamily.

The enzyme catalyses IMP + NH4(+) + NADP(+) = GMP + NADPH + 2 H(+). Functionally, catalyzes the irreversible NADPH-dependent deamination of GMP to IMP. It functions in the conversion of nucleobase, nucleoside and nucleotide derivatives of G to A nucleotides, and in maintaining the intracellular balance of A and G nucleotides. The protein is GMP reductase of Lysinibacillus sphaericus (strain C3-41).